The following is a 706-amino-acid chain: Transmembrane and coiled-coil domains protein 2 (706 aa).

Disordered regions lie at residues 1–221 and 251–280; these read MKRC…TTDT and VALS…PDPQ. Position 6 is a phosphoserine (S6). A compositionally biased stretch (basic residues) spans 83-94; that stretch reads GLKHLFHSRRRS. The segment covering 102–112 has biased composition (low complexity); that stretch reads SQEAQQQQQQQ. Positions 120-131 are enriched in basic and acidic residues; sequence PDEKERSPEMHR. The residue at position 163 (R163) is an Omega-N-methylarginine. The stretch at 330–365 forms a coiled coil; it reads KQVFEKKNQKSAQTIAQLHKKLEHYRRRLKEIEQNG. S435 carries the post-translational modification Phosphoserine. Positions 440 to 459 are disordered; sequence AHLKDPMEDGPPEEAARALS. Phosphoserine is present on residues S461 and S467. The interval 464–510 is disordered; that stretch reads LVSSPKYGSDDECSSASASSAGAGSNSGAGPGGALGSPRSNTLYGAP. Residues 477–487 are compositionally biased toward low complexity; that stretch reads SSASASSAGAG. The span at 488–498 shows a compositional bias: gly residues; sequence SNSGAGPGGAL. Residue S500 is modified to Phosphoserine. Residues 511–630 adopt a coiled-coil conformation; sequence GNLDTLLEEL…QQQQVVQLEG (120 aa). 2 helical membrane passes run 646 to 666 and 679 to 699; these read VILA…NFIT and ALLL…TYLL.

It belongs to the TEX28 family. As to quaternary structure, may form homodimers and heterodimers with TMCC2 or TMCC3 via the coiled-coil domains. Interacts with ribosomal proteins RPL4 and RPS6. Interacts with APOE and proteolytic processed C-terminal fragment C99 of the amyloid precursor protein (APP C99).

The protein localises to the endoplasmic reticulum membrane. Its function is as follows. May be involved in the regulation of the proteolytic processing of the amyloid precursor protein (APP) possibly also implicating APOE. The polypeptide is Transmembrane and coiled-coil domains protein 2 (Mus musculus (Mouse)).